The following is a 630-amino-acid chain: MDYSFDTTAEDPWVRISDCIKNLFSPIMSENPGHMPLQPNASLSEEDGTQGHPDGNPPKLDTANGTPKVYKSADRSTVKKGPPVAPKPAWFRQSLKGLRNRASDPRGLPDPALSTQPAPASREHLGPHIRASSSSSIKQRISSFETFGSSQLPDKGAQRLSLQPSSGEAAKPLGKHEGGRFSGLLGRGAAPTLVPQQPEQVLPSGSPAATEARDPGVSESPPPGLQPNQKTLPTGSDPLLRLLPTQTEKSQGPVLKMPSQRARSFPLTRSQSCETKLLDEKTSKLYSISSQVSSAVMKSLLCLPSSLSCAQTPCIPKEGASPTSSSNEDSAANGSAETSASDTGFSLNLSELREYTEGLTEAKEDDDGDHSSHQSGQSVISLLSSEELKQLIEEVKVLDEATLKQLDSIHVTILHKEEGAGLGFSLAGGADLENKVITVHKVFPNGLASQEGTIQKGNEVLSINGKSLKGTTHNDALAILRQAREPRQAVIVTRKLTAESMPDLNSTTDSAASASAASDVSVESSAEATVYTVTLEKMSAGLGFSLEGGKGSLHGDKPLTINRIFKGAASEQSETIQPGDEILQLAGTAMQGLTRFEAWNIIKALPDGPVTIVIRRKSLQPKETTAAADS.

2 disordered regions span residues 30-268 (ENPG…FPLT) and 316-343 (PKEGASPTSSSNEDSAANGSAETSASDT). Over residues 129-143 (IRASSSSSIKQRISS) the composition is skewed to low complexity. Residue Ser220 is modified to Phosphoserine. Positions 321 to 343 (SPTSSSNEDSAANGSAETSASDT) are enriched in polar residues. An interaction with PPP1R12A, PPP1R12B and PPP1R12C region spans residues 404–500 (KQLDSIHVTI…IVTRKLTAES (97 aa)). 2 PDZ domains span residues 410-495 (HVTI…VTRK) and 532-617 (TVTL…IRRK).

In terms of assembly, homotetramer. Pro-interleukin-16 interacts (via PDZ 2 domain) with PPP1R12A, PPP1R12B and PPP1R12C. Pro-interleukin-16 interacts with GRIN2A. Pro-interleukin-16 interacts with GABPB1. Pro-interleukin-16 interacts (via PDZ 3 domain) with HDAC3.

Its subcellular location is the secreted. The protein localises to the cytoplasm. It localises to the nucleus. Functionally, interleukin-16 stimulates a migratory response in CD4+ lymphocytes, monocytes, and eosinophils. Primes CD4+ T-cells for IL-2 and IL-15 responsiveness. Also induces T-lymphocyte expression of interleukin 2 receptor. Ligand for CD4. Pro-interleukin-16 is involved in cell cycle progression in T-cells. Appears to be involved in transcriptional regulation of SKP2 and is probably part of a transcriptional repression complex on the core promoter of the SKP2 gene. May act as a scaffold for GABPB1 (the DNA-binding subunit the GABP transcription factor complex) and HDAC3 thus maintaining transcriptional repression and blocking cell cycle progression in resting T-cells. This is Pro-interleukin-16 (IL16) from Macaca mulatta (Rhesus macaque).